The sequence spans 176 residues: NAD(P)H-quinone oxidoreductase subunit 6, chloroplastic (176 aa).

5 helical membrane passes run 10–30, 32–52, 61–81, 95–115, and 152–172; these read FILVFLGLVLILGGLAVVLLP, PIYSAFSLGLVLVCISLLYIL, AQLLIYVGAINVLIIFAVMFL, VGDGVTSVVCTSLFASLITTI, and FLIPFELISIILLVALIGAIA.

This sequence belongs to the complex I subunit 6 family. In terms of assembly, NDH is composed of at least 16 different subunits, 5 of which are encoded in the nucleus.

The protein localises to the plastid. Its subcellular location is the chloroplast thylakoid membrane. The catalysed reaction is a plastoquinone + NADH + (n+1) H(+)(in) = a plastoquinol + NAD(+) + n H(+)(out). It catalyses the reaction a plastoquinone + NADPH + (n+1) H(+)(in) = a plastoquinol + NADP(+) + n H(+)(out). NDH shuttles electrons from NAD(P)H:plastoquinone, via FMN and iron-sulfur (Fe-S) centers, to quinones in the photosynthetic chain and possibly in a chloroplast respiratory chain. The immediate electron acceptor for the enzyme in this species is believed to be plastoquinone. Couples the redox reaction to proton translocation, and thus conserves the redox energy in a proton gradient. This is NAD(P)H-quinone oxidoreductase subunit 6, chloroplastic (ndhG) from Trachelium caeruleum (Blue throatwort).